The sequence spans 100 residues: Large ribosomal subunit protein bL27 (100 aa).

Positions M1 to C9 are excised as a propeptide.

It belongs to the bacterial ribosomal protein bL27 family. In terms of processing, the N-terminus is cleaved by ribosomal processing cysteine protease Prp.

The sequence is that of Large ribosomal subunit protein bL27 from Clostridium acetobutylicum (strain ATCC 824 / DSM 792 / JCM 1419 / IAM 19013 / LMG 5710 / NBRC 13948 / NRRL B-527 / VKM B-1787 / 2291 / W).